The following is a 178-amino-acid chain: MIVAVGTKNPNKIRAVEDAYRLFGIPARIVPAPRPLTTPPQPVGLEAVLKGAVERAKAALQAVEKAEHGVGIEAGVVEAGGVHLDITIAAIVDAGGRTTIGFGPAFQIPPPFLSQVLSGVEMGAVAEQYFKRPSIGYREGLIGVLTKRRVTRYHLNLAAVAMALTPRLPHNSQLYLKP.

The protein belongs to the YjjX NTPase family. In terms of assembly, homodimer. Mg(2+) is required as a cofactor. The cofactor is Mn(2+).

The enzyme catalyses XTP + H2O = XDP + phosphate + H(+). It catalyses the reaction ITP + H2O = IDP + phosphate + H(+). Functionally, phosphatase that hydrolyzes non-canonical purine nucleotides such as XTP and ITP to their respective diphosphate derivatives. Probably excludes non-canonical purines from DNA/RNA precursor pool, thus preventing their incorporation into DNA/RNA and avoiding chromosomal lesions. This Pyrobaculum aerophilum (strain ATCC 51768 / DSM 7523 / JCM 9630 / CIP 104966 / NBRC 100827 / IM2) protein is Probable inosine/xanthosine triphosphatase.